A 480-amino-acid polypeptide reads, in one-letter code: Speriolin (480 aa).

The tract at residues 1-76 (MSLLTSYEGL…HQGVFLPPAS (76 aa)) is necessary for targeting to centrosomes. A coiled-coil region spans residues 2–45 (SLLTSYEGLRHQIERLVRENEELKKLVRLIRENQELKSAIKTQA). Disordered regions lie at residues 252-297 (INNI…SRVM) and 305-324 (VEMERKTPHRKSNKLPDNPR).

Belongs to the speriolin family. In terms of assembly, found in a complex with CDC20, CDC27 and TUBG1. Interacts with CDC20. In terms of tissue distribution, expressed in testis. Expressed in pachyten spermatocytes, spermatids and epididymal sperm (at protein level).

It is found in the cytoplasm. The protein localises to the cytoskeleton. Its subcellular location is the microtubule organizing center. It localises to the centrosome. The protein is Speriolin (Spatc1) of Mus musculus (Mouse).